Consider the following 317-residue polypeptide: Cytochrome c biogenesis protein CcsA (317 aa).

Helical transmembrane passes span 17-37, 44-64, 71-91, 101-121, 143-163, 223-243, 252-272, and 284-304; these read VVSI…IVGL, GMIV…IYSG, LYES…LPYL, ITSP…LTQI, MILS…LLVI, IISI…VWAN, WDPK…YLHI, and AIVA…INIL.

Belongs to the CcmF/CycK/Ccl1/NrfE/CcsA family. May interact with Ccs1.

The protein localises to the plastid. Its subcellular location is the chloroplast thylakoid membrane. Required during biogenesis of c-type cytochromes (cytochrome c6 and cytochrome f) at the step of heme attachment. The sequence is that of Cytochrome c biogenesis protein CcsA from Pelargonium hortorum (Common geranium).